Consider the following 133-residue polypeptide: Inhibitor of g-type lysozyme (133 aa).

Residues 1–22 form the signal peptide; sequence MKIKSIRKAVLLLALLTSTSFA.

It is found in the periplasm. In terms of biological role, inhibits activity of g-type lysozyme, which confers increased lysozyme tolerance to the bacterium. In Escherichia coli (strain K12), this protein is Inhibitor of g-type lysozyme (pliG).